A 174-amino-acid chain; its full sequence is ATP-dependent protease subunit HslV (174 aa).

Threonine 2 is an active-site residue. Glycine 157, cysteine 160, and threonine 163 together coordinate Na(+).

The protein belongs to the peptidase T1B family. HslV subfamily. As to quaternary structure, a double ring-shaped homohexamer of HslV is capped on each side by a ring-shaped HslU homohexamer. The assembly of the HslU/HslV complex is dependent on binding of ATP.

It is found in the cytoplasm. The catalysed reaction is ATP-dependent cleavage of peptide bonds with broad specificity.. With respect to regulation, allosterically activated by HslU binding. Its function is as follows. Protease subunit of a proteasome-like degradation complex believed to be a general protein degrading machinery. This Shewanella oneidensis (strain ATCC 700550 / JCM 31522 / CIP 106686 / LMG 19005 / NCIMB 14063 / MR-1) protein is ATP-dependent protease subunit HslV.